We begin with the raw amino-acid sequence, 343 residues long: Fructose-1,6-bisphosphatase class 1 (343 aa).

Mg(2+)-binding residues include glutamate 90, aspartate 109, leucine 111, and aspartate 112. Residues 112–115 and asparagine 199 contribute to the substrate site; that span reads DGSS. Residue glutamate 271 coordinates Mg(2+).

This sequence belongs to the FBPase class 1 family. In terms of assembly, homotetramer. It depends on Mg(2+) as a cofactor.

It localises to the cytoplasm. The catalysed reaction is beta-D-fructose 1,6-bisphosphate + H2O = beta-D-fructose 6-phosphate + phosphate. It functions in the pathway carbohydrate biosynthesis; Calvin cycle. The sequence is that of Fructose-1,6-bisphosphatase class 1 from Rhodopseudomonas palustris (strain ATCC BAA-98 / CGA009).